The following is a 288-amino-acid chain: Fatty acid-binding protein TM_1468 (288 aa).

The region spanning 3–283 (VKILVDSTAD…PGTVGFGIEV (281 aa)) is the DegV domain. 2 residues coordinate hexadecanoate: Thr63 and Ser96.

In terms of assembly, monomer.

Binds long-chain fatty acids, such as palmitate, and may play a role in lipid transport or fatty acid metabolism. In Thermotoga maritima (strain ATCC 43589 / DSM 3109 / JCM 10099 / NBRC 100826 / MSB8), this protein is Fatty acid-binding protein TM_1468.